Here is a 634-residue protein sequence, read N- to C-terminus: Chaperone protein HtpG (634 aa).

An a; substrate-binding region spans residues 1–344 (MNETVANNKE…SNDLPLNVSR (344 aa)). The interval 345–561 (EILQDNKVTQ…DFEMGTQMAK (217 aa)) is b. The c stretch occupies residues 562–634 (LLAAAGQAVP…TAINSLLTKG (73 aa)).

The protein belongs to the heat shock protein 90 family. In terms of assembly, homodimer.

The protein localises to the cytoplasm. Molecular chaperone. Has ATPase activity. This chain is Chaperone protein HtpG, found in Vibrio vulnificus (strain YJ016).